The primary structure comprises 1279 residues: Photoreceptor cilium actin regulator (1279 aa).

Glycine 2 is lipidated: N-myristoyl glycine. A lipid anchor (S-palmitoyl cysteine) is attached at cysteine 3. 5 disordered regions span residues 101 to 168, 380 to 598, 802 to 821, 860 to 1107, and 1127 to 1279; these read NKPQ…KGRV, AAQV…SHVE, EVSE…ENLP, ASHP…TTAK, and KSSS…KEIS. The span at 126–168 shows a compositional bias: basic and acidic residues; that stretch reads FSGKESKENTPQETSKGNRESVCHQPDSQDHCRQSATESKGRV. Over residues 477-491 the composition is skewed to acidic residues; the sequence is SEEEDCSPEEEDELS. Composition is skewed to basic and acidic residues over residues 535–547 and 580–598; these read LKMK…RIKF and GPER…SHVE. Acidic residues predominate over residues 804–818; that stretch reads SESEDISGDVEEDLE. Composition is skewed to polar residues over residues 886 to 901, 913 to 925, and 955 to 965; these read GSGS…SGST, DLNS…PSSE, and TNPTPGQSRTL. The span at 972–990 shows a compositional bias: basic and acidic residues; the sequence is FSRDPHSSEASRKGPERSL. Over residues 1047-1062 the composition is skewed to polar residues; sequence RKTTSPPCQHPQSNPA. Positions 1076 to 1090 are enriched in low complexity; that stretch reads PSSASCSSPSVSPSR. Over residues 1091–1100 the composition is skewed to basic and acidic residues; that stretch reads GSKDSIHSED. The span at 1226–1241 shows a compositional bias: polar residues; that stretch reads WNNSRVPELQGSSTKR. Positions 1259–1279 are enriched in basic and acidic residues; that stretch reads RMNRGQDRPQPESQPQHKEIS.

In terms of tissue distribution, specifically expressed in retina.

It is found in the cell projection. The protein localises to the cilium. It localises to the photoreceptor outer segment. The protein resides in the photoreceptor inner segment. Plays an essential role for normal photoreceptor cell maintenance and vision. The sequence is that of Photoreceptor cilium actin regulator from Mus musculus (Mouse).